The chain runs to 76 residues: Pigment-dispersing hormone A peptides (76 aa).

The signal sequence occupies residues 1-20 (MRSAMVVLVLVAMVAVFTRA). Ala73 carries the post-translational modification Alanine amide.

This sequence belongs to the arthropod PDH family. In terms of tissue distribution, optical ganglia of the eyestalk.

It localises to the secreted. Functionally, the pigment-dispersing hormone causes the migration of the distal retinal pigment into the proximal end of the pigment chromatophore cells and thus decreases the amount of light entering the retinulas. May also function as a neurotransmitter and/or neuromodulator. The sequence is that of Pigment-dispersing hormone A peptides from Faxonius limosus (Spinycheek crayfish).